Consider the following 337-residue polypeptide: Anthranilate phosphoribosyltransferase (337 aa).

Residues glycine 78, 81–82 (GD), threonine 86, 88–91 (NIST), 106–114 (KHGNRSVSS), and serine 118 contribute to the 5-phospho-alpha-D-ribose 1-diphosphate site. Residue glycine 78 coordinates anthranilate. Serine 90 is a binding site for Mg(2+). Asparagine 109 contacts anthranilate. Arginine 164 is a binding site for anthranilate. Residues aspartate 222 and glutamate 223 each coordinate Mg(2+).

It belongs to the anthranilate phosphoribosyltransferase family. Homodimer. It depends on Mg(2+) as a cofactor.

It carries out the reaction N-(5-phospho-beta-D-ribosyl)anthranilate + diphosphate = 5-phospho-alpha-D-ribose 1-diphosphate + anthranilate. It participates in amino-acid biosynthesis; L-tryptophan biosynthesis; L-tryptophan from chorismate: step 2/5. Catalyzes the transfer of the phosphoribosyl group of 5-phosphorylribose-1-pyrophosphate (PRPP) to anthranilate to yield N-(5'-phosphoribosyl)-anthranilate (PRA). The sequence is that of Anthranilate phosphoribosyltransferase from Idiomarina loihiensis (strain ATCC BAA-735 / DSM 15497 / L2-TR).